A 64-amino-acid chain; its full sequence is Large ribosomal subunit protein uL29 (64 aa).

The protein belongs to the universal ribosomal protein uL29 family.

This is Large ribosomal subunit protein uL29 from Burkholderia mallei (strain NCTC 10247).